We begin with the raw amino-acid sequence, 305 residues long: Protoheme IX farnesyltransferase (305 aa).

9 helical membrane-spanning segments follow: residues 31-51 (VMSL…YSVH), 52-72 (PFIA…AGAI), 102-119 (ALSF…FMAL), 123-145 (LLAS…IWLK), 151-171 (NIVI…AAVS), 179-199 (IILF…LALF), 225-245 (ILIY…IGMN), 247-267 (FIYL…SGSL), and 284-304 (SIFY…ISLI).

It belongs to the UbiA prenyltransferase family. Protoheme IX farnesyltransferase subfamily.

It is found in the cell inner membrane. The catalysed reaction is heme b + (2E,6E)-farnesyl diphosphate + H2O = Fe(II)-heme o + diphosphate. It participates in porphyrin-containing compound metabolism; heme O biosynthesis; heme O from protoheme: step 1/1. Its function is as follows. Converts heme B (protoheme IX) to heme O by substitution of the vinyl group on carbon 2 of heme B porphyrin ring with a hydroxyethyl farnesyl side group. In Rickettsia felis (strain ATCC VR-1525 / URRWXCal2) (Rickettsia azadi), this protein is Protoheme IX farnesyltransferase.